A 142-amino-acid polypeptide reads, in one-letter code: Protein archease (142 aa).

2 residues coordinate Ca(2+): Asp-12 and Asp-141.

Belongs to the archease family.

Activates the tRNA-splicing ligase complex by facilitating the enzymatic turnover of catalytic subunit RtcB. Acts by promoting the guanylylation of RtcB, a key intermediate step in tRNA ligation. Can also alter the NTP specificity of RtcB such that ATP, dGTP or ITP is used efficiently. This chain is Protein archease, found in Thermococcus kodakarensis (strain ATCC BAA-918 / JCM 12380 / KOD1) (Pyrococcus kodakaraensis (strain KOD1)).